The sequence spans 715 residues: Fatty acid oxidation complex subunit alpha (715 aa).

The enoyl-CoA hydratase stretch occupies residues Met-1 to Pro-194. The segment at His-310–Ser-715 is 3-hydroxyacyl-CoA dehydrogenase.

This sequence in the N-terminal section; belongs to the enoyl-CoA hydratase/isomerase family. It in the central section; belongs to the 3-hydroxyacyl-CoA dehydrogenase family. In terms of assembly, heterotetramer of two alpha chains (FadJ) and two beta chains (FadI).

It is found in the cytoplasm. The enzyme catalyses a (3S)-3-hydroxyacyl-CoA = a (2E)-enoyl-CoA + H2O. It catalyses the reaction a 4-saturated-(3S)-3-hydroxyacyl-CoA = a (3E)-enoyl-CoA + H2O. The catalysed reaction is a (3S)-3-hydroxyacyl-CoA + NAD(+) = a 3-oxoacyl-CoA + NADH + H(+). It carries out the reaction (3S)-3-hydroxybutanoyl-CoA = (3R)-3-hydroxybutanoyl-CoA. It functions in the pathway lipid metabolism; fatty acid beta-oxidation. Its function is as follows. Catalyzes the formation of a hydroxyacyl-CoA by addition of water on enoyl-CoA. Also exhibits 3-hydroxyacyl-CoA epimerase and 3-hydroxyacyl-CoA dehydrogenase activities. This Serratia proteamaculans (strain 568) protein is Fatty acid oxidation complex subunit alpha.